A 427-amino-acid polypeptide reads, in one-letter code: FAD-dependent monooxygenase OpS4 (427 aa).

An N-terminal signal peptide occupies residues methionine 1–alanine 22. Glutamate 37 contributes to the FAD binding site. Asparagine 54 carries N-linked (GlcNAc...) asparagine glycosylation. Residues arginine 112, aspartate 306, and alanine 319 each contribute to the FAD site.

The protein belongs to the paxM FAD-dependent monooxygenase family. The cofactor is FAD.

The protein operates within secondary metabolite biosynthesis. Its function is as follows. FAD-dependent monooxygenase; part of the gene cluster that mediates the biosynthesis of the bibenzoquinone oosporein, a metabolite required for fungal virulence that acts by evading host immunity to facilitate fungal multiplication in insects. The non-reducing polyketide synthase OpS1 produces orsellinic acid by condensing acetyl-CoA with 3 malonyl-CoA units. Orsellinic acid is then hydroxylated to benzenetriol by the hydroxylase OpS4. The intermediate is oxidized either nonenzymatically to 5,5'-dideoxy-oosporein or enzymatically to benzenetetrol by the oxidoreductase OpS7. The latter is further dimerized to oosporein by the catalase OpS5. OpS6 probably functions en route for protecting cells against oxidative stress by scavenging any leaked free radical form of benzenetetrol by activating the thiol group of glutathione. The chain is FAD-dependent monooxygenase OpS4 from Beauveria bassiana (strain ARSEF 2860) (White muscardine disease fungus).